Here is a 278-residue protein sequence, read N- to C-terminus: Short-chain dehydrogenase/reductase eupG (278 aa).

NADP(+) is bound by residues leucine 19, aspartate 71, and asparagine 98. Serine 155 acts as the Proton donor in catalysis. NADP(+) is bound by residues tyrosine 188, lysine 192, and threonine 223. The Proton acceptor role is filled by tyrosine 188. Lysine 192 (lowers pKa of active site Tyr) is an active-site residue.

The protein belongs to the short-chain dehydrogenases/reductases (SDR) family.

It functions in the pathway secondary metabolite biosynthesis; terpenoid biosynthesis. Short-chain dehydrogenase/reductase; part of the gene cluster that mediates the biosynthesis of eupenifeldin, a bistropolone meroterpenoid that acts as an antitumor agent. The first step of eupenifeldin biosynthesis is the biosynthesis of 3-methylorcinaldehyde performed by the non-reducing polyketide synthase eupA. Oxidative dearomatization of 3-methylorcinaldehyde likely catalyzed by the FAD-dependent monooxygenase eupB is followed by oxidative ring expansion by the 2-oxoglutarate-dependent dioxygenase eupC to provide the first tropolone metabolite, tropolone stipitaldehyde. In parallel, generation of sesquiterpene alpha-humulene from farnesylpyrophosphate (FPP) is catalyzed by the terpene cyclase eupE. The cytochrome P450 monooxygenase eupD then hydroxylates humulene to humulenol. The putative Diels-Alderase eupF probably catalyzes the formation of the tropolone-humulene skeleton by linking humulenol and the polyketide moiety. The short-chain dehydrogenase/reductase eupG and the flavin-dependent monooxygenase eupH are also essential for eupenifeldin biosynthesis and are likely the additional decorating enzymes of the tropolone-humulene skeleton to produce final eupenifeldin or derivatives. This is Short-chain dehydrogenase/reductase eupG from Phoma sp.